Consider the following 32-residue polypeptide: Acatoxin 1 (32 aa).

Cystine bridges form between Cys-1/Cys-15, Cys-8/Cys-20, and Cys-14/Cys-26.

It is found in the secreted. It localises to the nematocyst. Functionally, reversibly inhibits acid-sensing ion channels (ASIC) in rat dorsal root ganglia neurons. Reversibly inhibits voltage-gated potassium channels (Kv) in rat DRG neurons. In Anthopleura cascaia (Sea anemone), this protein is Acatoxin 1.